We begin with the raw amino-acid sequence, 495 residues long: MASILWTTSLKVLLALIVWIGTTIIYNIYFHPLHSFPGPVLARATRLYSAYIRAVGLSERKSLQWHNQYGGIVRIAPDELSFNTGSAWNDIYGTKSRKSQRLQKDPHFYMGATAPNGEKNMGAVGDEDHSRIRSVLAHAFTDTALHAQESLIRAHVDRLVQRLQDLHGKPTDIVRWMHHHSYDVIAHLCFGQDLDALGSKDWFPPARVVFEGIREGVTLIEVLRFVPFKATVLDILVQAFGKARRENFNASVARAMLRLRLAETTSIDFISYILRVKESAKELTRSELTANVALLIDAGSETTATMLSGCLFYLSLNRTTLEELTHKLREDFRTHDQLSLQNLAKMKLLTYVIQESLRIYPPLPATLPRLTPATGAMINGVLIPPKTRVGMNAFAAYHSTQNFADADMFIPQRWDNTNDRFARDQRHVHRPFSLGSRGCLGKNLAWAEIRLTLACLLWNFDVILEPGQEEWHGKQLTWFIWNKDPLYMRFAPRTK.

A helical membrane pass occupies residues 12–32 (VLLALIVWIGTTIIYNIYFHP). N-linked (GlcNAc...) asparagine glycans are attached at residues N249 and N317. C439 provides a ligand contact to heme.

This sequence belongs to the cytochrome P450 family. It depends on heme as a cofactor.

It localises to the membrane. The protein operates within mycotoxin biosynthesis. In terms of biological role, cytochrome P450 monooxygenase; part of the gene cluster that mediates the biosynthesis of the diterpene glucoside brassicicene C. In the first step of the brassicicene C biosynthesis, the bifunctional diterpene synthase bsc8 that possesses both prenyl transferase and terpene cyclase activity, converts isopentenyl diphosphate and dimethylallyl diphosphate into geranylgeranyl diphosphate (GGDP) that is further converted into fusicocca-2,10(14)-diene, the first precursor for brassicicene C. Fusicocca-2,10(14)-diene is then substrate of cytochrome P450 monooxygenase bsc1 for hydroxylation at the C-8 position. Oxidation at C-16 position to aldehyde is then catalyzed by the cytochrome P450 monooyxygenase bsc7, yielding fusicocca-2,10(14)-diene-8-beta,16-diol. Follows the isomerization of the double bond and reduction of aldehyde to alcohol catalyzed by the short-chain dehydrogenase/reductase bsc3 to yield the diol compound fusicocca-1,10(14)-diene-8 beta,16-diol. The next step is the oxidation at the C-3 position of fusicocca-2,10(14)-diene-8-beta,16-diol catalyzed by the alpha-ketoglutarate dependent dioxygenase bsc9, to produce a triol compound. Methylation of the hydroxy group at position 16 is performed by the methyltransferase bsc6. 16-O-methylation is followed by oxidation at the C-13 position to ketone and an alkyl shift of the methyl group leads to brassicicene C. Although the probable acetyltransferase bsc4 is included in the gene cluster, no acetylation reactions are necessary for brassicicene C biosynthesis. However, the fact that brassicicene E, which is a structurally related compound having an acetoxy group at position 12, was previously isolated from another strain of A.brassicicola suggests that the ATCC 96836 strain might also produce a small amount of brassicicene E. This Alternaria brassicicola (Dark leaf spot agent) protein is Fusicoccadiene 8-ol C-16 hydroxylase.